A 213-amino-acid chain; its full sequence is NADH dehydrogenase [ubiquinone] iron-sulfur protein 7, mitochondrial (213 aa).

The N-terminal 31 residues, 1-31 (MALIARNAKLLTGTAPFLQRAATIHTTLPSL), are a transit peptide targeting the mitochondrion. The segment covering 30–42 (SLSQQPASSPATS) has biased composition (low complexity). The interval 30-52 (SLSQQPASSPATSGGAQPPSMNT) is disordered. Positions 88, 89, 153, and 183 each coordinate [4Fe-4S] cluster.

The protein belongs to the complex I 20 kDa subunit family. In terms of assembly, complex I is composed of about 45 different subunits. This is a component of the iron-sulfur (IP) fragment of the enzyme. It depends on [4Fe-4S] cluster as a cofactor.

It is found in the mitochondrion. It carries out the reaction a ubiquinone + NADH + 5 H(+)(in) = a ubiquinol + NAD(+) + 4 H(+)(out). Core subunit of the mitochondrial membrane respiratory chain NADH dehydrogenase (Complex I) that is believed to belong to the minimal assembly required for catalysis. Complex I functions in the transfer of electrons from NADH to the respiratory chain. The immediate electron acceptor for the enzyme is believed to be ubiquinone. This Solanum tuberosum (Potato) protein is NADH dehydrogenase [ubiquinone] iron-sulfur protein 7, mitochondrial.